A 214-amino-acid polypeptide reads, in one-letter code: Osteoclast-stimulating factor 1 (214 aa).

Ser2 carries the N-acetylserine modification. The 60-residue stretch at 12–71 (GQVKVFRALYTFEPRTPDELYFEEGDIIYITDMSDTNWWKGTCKGRTGLIPSNYVAEQAE) folds into the SH3 domain. ANK repeat units lie at residues 72-101 (SIDN…GVNG), 105-135 (AGST…ELNQ), and 139-168 (LGDT…RTDL). A phosphoserine mark is found at Ser202 and Ser213.

As to quaternary structure, interacts with SRC and SMN1. Interacts with FASLG.

It is found in the cytoplasm. Induces bone resorption, acting probably through a signaling cascade which results in the secretion of factor(s) enhancing osteoclast formation and activity. The chain is Osteoclast-stimulating factor 1 (OSTF1) from Bos taurus (Bovine).